Consider the following 415-residue polypeptide: Peptide chain release factor subunit 1 (415 aa).

Belongs to the eukaryotic release factor 1 family. As to quaternary structure, heterodimer of two subunits, one of which binds GTP.

It localises to the cytoplasm. Its function is as follows. Directs the termination of nascent peptide synthesis (translation) in response to the termination codons UAA, UAG and UGA. This chain is Peptide chain release factor subunit 1, found in Thermococcus sibiricus (strain DSM 12597 / MM 739).